The following is a 346-amino-acid chain: tRNA-specific 2-thiouridylase MnmA (346 aa).

6 to 13 (AMSGGTDS) is an ATP binding site. Cys-90 acts as the Nucleophile in catalysis. Residues Cys-90 and Cys-187 are joined by a disulfide bond. Gly-114 contributes to the ATP binding site. Residues 137–139 (KDQ) are interaction with tRNA. The active-site Cysteine persulfide intermediate is the Cys-187. The segment at 292 to 293 (RY) is interaction with tRNA.

This sequence belongs to the MnmA/TRMU family.

It is found in the cytoplasm. It carries out the reaction S-sulfanyl-L-cysteinyl-[protein] + uridine(34) in tRNA + AH2 + ATP = 2-thiouridine(34) in tRNA + L-cysteinyl-[protein] + A + AMP + diphosphate + H(+). Its function is as follows. Catalyzes the 2-thiolation of uridine at the wobble position (U34) of tRNA, leading to the formation of s(2)U34. The chain is tRNA-specific 2-thiouridylase MnmA from Nitratidesulfovibrio vulgaris (strain ATCC 29579 / DSM 644 / CCUG 34227 / NCIMB 8303 / VKM B-1760 / Hildenborough) (Desulfovibrio vulgaris).